A 643-amino-acid chain; its full sequence is Beta-1,3-galactosyltransferase GALT1 (643 aa).

At 1-6 the chain is on the cytoplasmic side; the sequence is MKRFYG. Residues 7–23 form a helical; Signal-anchor for type II membrane protein membrane-spanning segment; that stretch reads GLLVVSMCMFLTVYRYV. Over 24–643 the chain is Lumenal; the sequence is DLNTPVEKPY…TKRSLCCREW (620 aa). Residues Asn-45, Asn-87, Asn-144, Asn-162, Asn-277, Asn-287, and Asn-508 are each glycosylated (N-linked (GlcNAc...) asparagine). The Galectin domain occupies 171–364; that stretch reads LKLQIPCGLT…DFRLISILAS (194 aa).

Belongs to the glycosyltransferase 31 family. In terms of assembly, interacts with GMII. Mn(2+) is required as a cofactor. In terms of tissue distribution, expressed in stems and siliques.

The protein resides in the golgi apparatus membrane. It functions in the pathway protein modification; protein glycosylation. Its function is as follows. Beta-1,3-galactosyltransferase that transfers galactose from UDP-galactose to substrates with a terminal beta-N-acetylglucosamine (beta-GlcNAc) residue. Involved in the biosynthesis of N-glycans containing Lewis a structures (with the combination of FUT13). The polypeptide is Beta-1,3-galactosyltransferase GALT1 (Arabidopsis thaliana (Mouse-ear cress)).